A 359-amino-acid chain; its full sequence is ATPase ASNA1 homolog (359 aa).

ATP is bound at residue 23 to 30 (KGGVGKTT). Aspartate 63 is a catalytic residue. The ATP site is built by glutamate 252 and asparagine 279. Residues cysteine 291 and cysteine 294 each coordinate Zn(2+).

Belongs to the arsA ATPase family. As to quaternary structure, homodimer.

The protein localises to the cytoplasm. It is found in the endoplasmic reticulum. Functionally, ATPase required for the post-translational delivery of tail-anchored (TA) proteins to the endoplasmic reticulum. Recognizes and selectively binds the transmembrane domain of TA proteins in the cytosol. This complex then targets to the endoplasmic reticulum by membrane-bound receptors, where the tail-anchored protein is released for insertion. This process is regulated by ATP binding and hydrolysis. ATP binding drives the homodimer towards the closed dimer state, facilitating recognition of newly synthesized TA membrane proteins. ATP hydrolysis is required for insertion. Subsequently, the homodimer reverts towards the open dimer state, lowering its affinity for the membrane-bound receptor, and returning it to the cytosol to initiate a new round of targeting. This chain is ATPase ASNA1 homolog, found in Trypanosoma cruzi (strain CL Brener).